Consider the following 793-residue polypeptide: Ribosome biogenesis protein BOP1 homolog (793 aa).

A compositionally biased stretch (basic residues) spans 1-11 (MTKKLTLKRKG). Residues 1-168 (MTKKLTLKRK…DSDTSDEEDI (168 aa)) form a disordered region. Composition is skewed to acidic residues over residues 44–53 (EDTTDDEGID), 60–72 (SSED…DEEG), and 83–116 (SSEE…DGDE). Residues 117-129 (EKPTTSKQNKSED) are compositionally biased toward basic and acidic residues. The span at 133–143 (SSKVSKKTQPP) shows a compositional bias: polar residues. Positions 146-161 (DLVKRDPSHPEYHDSD) are enriched in basic and acidic residues. WD repeat units lie at residues 454-495 (GHTD…RTIE), 497-535 (EDVV…KVLV), 579-621 (NHFK…SQIP), 624-662 (KSKG…LVKK), 665-704 (TNSK…KPYQ), 708-747 (LHRN…DLLQ), and 763-793 (REDF…RLYT).

It belongs to the WD repeat BOP1/ERB1 family.

Its subcellular location is the nucleus. It is found in the nucleolus. It localises to the nucleoplasm. Its function is as follows. Required for maturation of ribosomal RNAs and formation of the large ribosomal subunit. The sequence is that of Ribosome biogenesis protein BOP1 homolog from Drosophila ananassae (Fruit fly).